The primary structure comprises 859 residues: DNA mismatch repair protein MutS (859 aa).

Residue 617 to 624 (GPNMGGKS) participates in ATP binding.

Belongs to the DNA mismatch repair MutS family.

Functionally, this protein is involved in the repair of mismatches in DNA. It is possible that it carries out the mismatch recognition step. This protein has a weak ATPase activity. The polypeptide is DNA mismatch repair protein MutS (Stutzerimonas stutzeri (strain A1501) (Pseudomonas stutzeri)).